Consider the following 103-residue polypeptide: Large ribosomal subunit protein bL21 (103 aa).

Belongs to the bacterial ribosomal protein bL21 family. As to quaternary structure, part of the 50S ribosomal subunit. Contacts protein L20.

This protein binds to 23S rRNA in the presence of protein L20. In Sodalis glossinidius (strain morsitans), this protein is Large ribosomal subunit protein bL21.